The sequence spans 79 residues: Ferredoxin oxidoreductase 1 subunit ForD (79 aa).

4Fe-4S ferredoxin-type domains lie at 3 to 35 and 37 to 65; these read YVAQ…YTDE and HHAY…RDSI. [4Fe-4S] cluster is bound by residues Cys12, Cys17, Cys20, Cys24, Cys46, Cys49, Cys52, and Cys56.

In terms of assembly, heterotetramer of one alpha, one beta, one delta and one gamma chain. The cofactor is [4Fe-4S] cluster.

The sequence is that of Ferredoxin oxidoreductase 1 subunit ForD (forD1) from Aquifex aeolicus (strain VF5).